A 561-amino-acid chain; its full sequence is Glycoprotein (561 aa).

The N-terminal stretch at methionine 1–serine 30 is a signal peptide. Over glutamine 31–leucine 495 the chain is Virion surface. 5 disulfides stabilise this stretch: cysteine 59/cysteine 327, cysteine 95/cysteine 128, cysteine 104/cysteine 150, cysteine 214/cysteine 261, and cysteine 256/cysteine 296. Residues tyrosine 496–leucine 530 form a helical membrane-spanning segment. The Intravirion segment spans residues cysteine 531 to phenylalanine 561.

This sequence belongs to the vesiculovirus glycoprotein family. As to quaternary structure, homotrimer. Post-translationally, glycosylated by host.

It localises to the virion membrane. Its subcellular location is the host membrane. Functionally, attaches the virus to host receptors, inducing clathrin-dependent endocytosis of the virion. Its function is as follows. In the endosome, the acidic pH induces conformational changes in the glycoprotein trimer, which trigger fusion between virus and endosomal membrane. This is Glycoprotein (G) from Drosophila melanogaster sigma virus (isolate Drosophila/USA/AP30/2005) (DMelSV).